The sequence spans 327 residues: Aspartate--ammonia ligase (327 aa).

It belongs to the class-II aminoacyl-tRNA synthetase family. AsnA subfamily.

The protein resides in the cytoplasm. It catalyses the reaction L-aspartate + NH4(+) + ATP = L-asparagine + AMP + diphosphate + H(+). Its pathway is amino-acid biosynthesis; L-asparagine biosynthesis; L-asparagine from L-aspartate (ammonia route): step 1/1. The polypeptide is Aspartate--ammonia ligase (Bacillus cereus (strain AH187)).